Reading from the N-terminus, the 230-residue chain is Uracil-DNA glycosylase (230 aa).

Residue D72 is the Proton acceptor of the active site.

Belongs to the uracil-DNA glycosylase (UDG) superfamily. UNG family.

It localises to the cytoplasm. The catalysed reaction is Hydrolyzes single-stranded DNA or mismatched double-stranded DNA and polynucleotides, releasing free uracil.. Excises uracil residues from the DNA which can arise as a result of misincorporation of dUMP residues by DNA polymerase or due to deamination of cytosine. In Wolinella succinogenes (strain ATCC 29543 / DSM 1740 / CCUG 13145 / JCM 31913 / LMG 7466 / NCTC 11488 / FDC 602W) (Vibrio succinogenes), this protein is Uracil-DNA glycosylase.